The following is a 259-amino-acid chain: uncharacterized protein (259 aa).

The a divalent metal cation site is built by histidine 9, histidine 11, glutamate 97, histidine 133, histidine 157, and aspartate 207.

Belongs to the metallo-dependent hydrolases superfamily. TatD-type hydrolase family. It depends on a divalent metal cation as a cofactor.

This is an uncharacterized protein from Escherichia coli (strain K12).